Consider the following 561-residue polypeptide: uncharacterized protein (561 aa).

6 consecutive transmembrane segments (helical) span residues 10-29 (LLRN…GYWI), 34-56 (FGSL…SQIG), 63-80 (LKTV…FQSG), 95-117 (VLMA…RMFH), 122-144 (LAAG…SSAL), and 164-186 (GYAV…ILPW). RCK C-terminal domains lie at 205–287 (QGMA…LLGE) and 294–376 (HDMD…ELGS). Helical transmembrane passes span 386 to 403 (LVFH…GLIV), 407 to 429 (GSIP…FGWY), 442 to 464 (AAST…LQTG), 479 to 501 (FMLG…RYVL), and 538 to 560 (SFAI…VVAF).

It belongs to the AAE transporter (TC 2.A.81) family.

The protein resides in the cell membrane. This is an uncharacterized protein from Zymomonas mobilis subsp. mobilis (strain ATCC 31821 / ZM4 / CP4).